A 185-amino-acid polypeptide reads, in one-letter code: Ribosome-recycling factor (185 aa).

This sequence belongs to the RRF family.

It is found in the cytoplasm. Its function is as follows. Responsible for the release of ribosomes from messenger RNA at the termination of protein biosynthesis. May increase the efficiency of translation by recycling ribosomes from one round of translation to another. This Geobacter sp. (strain M21) protein is Ribosome-recycling factor.